The primary structure comprises 59 residues: Temporin-CDYe (59 aa).

Positions 1-22 (MFTLKKSMLLLLFLGTISLTLC) are cleaved as a signal peptide. A propeptide spanning residues 23–42 (EEERDANEEEENGGEVKVEE) is cleaved from the precursor.

The protein belongs to the frog skin active peptide (FSAP) family. Temporin subfamily. As to expression, expressed by the skin glands.

It localises to the secreted. Antimicrobial peptide. This chain is Temporin-CDYe, found in Rana dybowskii (Dybovsky's frog).